Consider the following 262-residue polypeptide: MRFGLNIDHIVTLREIRKTYEPEILEALFIAKNTHKVDLITIHLREDRRHIQNEDVLKLLEISPLPINIECSINAEITDFLCSLKNKPSKVTIVPENRNEVTTEGGLDCSLKGLGEVIRAYHNKGIEVSLFIDPLKDALHFAREHQVKQVEFHTGVYANLHNALYSNANNQIHAISVLKDKSPKELKEELHNAFLQLRRMSKEAFFMGITACAGHGLNYTNVKELLKIPSLRELNIGHSVVSKAVLVGLEKAILEMAQLIKR.

A 3-amino-2-oxopropyl phosphate-binding site is contributed by Asn6. 8–9 contacts 1-deoxy-D-xylulose 5-phosphate; sequence DH. Arg17 contacts 3-amino-2-oxopropyl phosphate. His43 acts as the Proton acceptor in catalysis. 2 residues coordinate 1-deoxy-D-xylulose 5-phosphate: Arg45 and His50. The Proton acceptor role is filled by Glu70. Thr102 is a 1-deoxy-D-xylulose 5-phosphate binding site. Residue His215 is the Proton donor of the active site. 3-amino-2-oxopropyl phosphate is bound by residues Gly216 and 237 to 238; that span reads GH.

Belongs to the PNP synthase family. As to quaternary structure, homooctamer; tetramer of dimers.

It localises to the cytoplasm. The catalysed reaction is 3-amino-2-oxopropyl phosphate + 1-deoxy-D-xylulose 5-phosphate = pyridoxine 5'-phosphate + phosphate + 2 H2O + H(+). It functions in the pathway cofactor biosynthesis; pyridoxine 5'-phosphate biosynthesis; pyridoxine 5'-phosphate from D-erythrose 4-phosphate: step 5/5. Catalyzes the complicated ring closure reaction between the two acyclic compounds 1-deoxy-D-xylulose-5-phosphate (DXP) and 3-amino-2-oxopropyl phosphate (1-amino-acetone-3-phosphate or AAP) to form pyridoxine 5'-phosphate (PNP) and inorganic phosphate. The polypeptide is Pyridoxine 5'-phosphate synthase (Helicobacter pylori (strain ATCC 700392 / 26695) (Campylobacter pylori)).